A 252-amino-acid polypeptide reads, in one-letter code: Chitooligosaccharide deacetylase (252 aa).

The Mg(2+) site is built by His-61 and His-125.

It belongs to the YdjC deacetylase family. ChbG subfamily. As to quaternary structure, homodimer. Mg(2+) is required as a cofactor.

It is found in the cytoplasm. The catalysed reaction is N,N'-diacetylchitobiose + H2O = N-acetyl-beta-D-glucosaminyl-(1-&gt;4)-D-glucosamine + acetate. The enzyme catalyses diacetylchitobiose-6'-phosphate + H2O = N'-monoacetylchitobiose-6'-phosphate + acetate. It functions in the pathway glycan degradation; chitin degradation. Involved in the degradation of chitin. ChbG is essential for growth on the acetylated chitooligosaccharides chitobiose and chitotriose but is dispensable for growth on cellobiose and chitosan dimer, the deacetylated form of chitobiose. Deacetylation of chitobiose-6-P and chitotriose-6-P is necessary for both the activation of the chb promoter by the regulatory protein ChbR and the hydrolysis of phosphorylated beta-glucosides by the phospho-beta-glucosidase ChbF. Catalyzes the removal of only one acetyl group from chitobiose-6-P to yield monoacetylchitobiose-6-P, the inducer of ChbR and the substrate of ChbF. This Salmonella schwarzengrund (strain CVM19633) protein is Chitooligosaccharide deacetylase.